Consider the following 645-residue polypeptide: MLQQAQTTSRNTLLDRVDSPKDIRQLTHDDLIILAAEIREKIIDTVSKTGGHLAPSLGVVELTLALHYVFNTPTDKLVWDVGHQSYAHKILTGRRKQFDTLRQYRGMSGFPKRGESDYDAFETGHSSTSISAALGMTLAMDLLQQDNKAIAVIGDGSMTAGMAFEALNHAGHLDKNLIVILNDNEMSISPNVGALSSFLSRKLTGKTMRRVKSHLVEKLQDSDVGENILNVLRKSEESFKSFFTPGMLFEAFKFDYIGPIDGHDIDALISTLNTVRDTAKGPALIHVLTKKGKGYLPAEENPDAFHGVGPFNRQTGKIIKKKGPASYTTVFGQTMLELGKKNKNIVAISAAMVAGTGLTPFSEAYPDRFFDVGIAEQHAITFAAGLASQGMRPVVAIYSSFYQRAMDQIIHDVCIPNLPVTLAIDRAGVVGDDGPTHHGIFDISFLRFIPNLTIMAPKDEAELQQMLVTATGHDGPTAIRYPRGAGEDVSTSQEIESIPILEIGRGELLREGDDILLLPIGNRVYPAMRAAEELAKQGISASVINPRFIKPLDAELICQQAKKTGRIITIEDNTLCSGFGSAVLELLSQKSLYGIKTKILGHPHAFVEHGPQKTLWENSGITSRGIIMAALDLLQKETDPSVANE.

Residues histidine 83 and 124-126 (GHS) contribute to the thiamine diphosphate site. Aspartate 155 contributes to the Mg(2+) binding site. Thiamine diphosphate-binding positions include 156 to 157 (GS), asparagine 184, tyrosine 295, and glutamate 376. Position 184 (asparagine 184) interacts with Mg(2+).

It belongs to the transketolase family. DXPS subfamily. Homodimer. Mg(2+) serves as cofactor. Thiamine diphosphate is required as a cofactor.

It catalyses the reaction D-glyceraldehyde 3-phosphate + pyruvate + H(+) = 1-deoxy-D-xylulose 5-phosphate + CO2. It participates in metabolic intermediate biosynthesis; 1-deoxy-D-xylulose 5-phosphate biosynthesis; 1-deoxy-D-xylulose 5-phosphate from D-glyceraldehyde 3-phosphate and pyruvate: step 1/1. In terms of biological role, catalyzes the acyloin condensation reaction between C atoms 2 and 3 of pyruvate and glyceraldehyde 3-phosphate to yield 1-deoxy-D-xylulose-5-phosphate (DXP). The protein is 1-deoxy-D-xylulose-5-phosphate synthase of Desulfotalea psychrophila (strain LSv54 / DSM 12343).